The chain runs to 526 residues: Peptide chain release factor 3 (526 aa).

In terms of domain architecture, tr-type G spans 8 to 277 (GKRRTFAIIS…GLTDWAPAPQ (270 aa)). Residues 17-24 (SHPDAGKT), 85-89 (DTPGH), and 139-142 (NKLD) each bind GTP.

It belongs to the TRAFAC class translation factor GTPase superfamily. Classic translation factor GTPase family. PrfC subfamily.

It is found in the cytoplasm. Its function is as follows. Increases the formation of ribosomal termination complexes and stimulates activities of RF-1 and RF-2. It binds guanine nucleotides and has strong preference for UGA stop codons. It may interact directly with the ribosome. The stimulation of RF-1 and RF-2 is significantly reduced by GTP and GDP, but not by GMP. This is Peptide chain release factor 3 from Aliivibrio fischeri (strain ATCC 700601 / ES114) (Vibrio fischeri).